The following is a 122-amino-acid chain: Ribosome-binding factor A (122 aa).

The protein belongs to the RbfA family. Monomer. Binds 30S ribosomal subunits, but not 50S ribosomal subunits or 70S ribosomes.

It localises to the cytoplasm. One of several proteins that assist in the late maturation steps of the functional core of the 30S ribosomal subunit. Associates with free 30S ribosomal subunits (but not with 30S subunits that are part of 70S ribosomes or polysomes). Required for efficient processing of 16S rRNA. May interact with the 5'-terminal helix region of 16S rRNA. The sequence is that of Ribosome-binding factor A from Moorella thermoacetica (strain ATCC 39073 / JCM 9320).